The chain runs to 127 residues: Large ribosomal subunit protein uL18 (127 aa).

It belongs to the universal ribosomal protein uL18 family. As to quaternary structure, part of the 50S ribosomal subunit; part of the 5S rRNA/L5/L18/L25 subcomplex. Contacts the 5S and 23S rRNAs.

In terms of biological role, this is one of the proteins that bind and probably mediate the attachment of the 5S RNA into the large ribosomal subunit, where it forms part of the central protuberance. The protein is Large ribosomal subunit protein uL18 of Streptomyces avermitilis (strain ATCC 31267 / DSM 46492 / JCM 5070 / NBRC 14893 / NCIMB 12804 / NRRL 8165 / MA-4680).